Here is a 303-residue protein sequence, read N- to C-terminus: Aspartate carbamoyltransferase catalytic subunit (303 aa).

Positions 51 and 52 each coordinate carbamoyl phosphate. Lys80 contacts L-aspartate. The carbamoyl phosphate site is built by Arg101, His129, and Gln132. L-aspartate is bound by residues Arg162 and Arg221. Positions 260 and 261 each coordinate carbamoyl phosphate.

The protein belongs to the aspartate/ornithine carbamoyltransferase superfamily. ATCase family. Heterooligomer of catalytic and regulatory chains.

It catalyses the reaction carbamoyl phosphate + L-aspartate = N-carbamoyl-L-aspartate + phosphate + H(+). It functions in the pathway pyrimidine metabolism; UMP biosynthesis via de novo pathway; (S)-dihydroorotate from bicarbonate: step 2/3. Its function is as follows. Catalyzes the condensation of carbamoyl phosphate and aspartate to form carbamoyl aspartate and inorganic phosphate, the committed step in the de novo pyrimidine nucleotide biosynthesis pathway. This Saccharolobus islandicus (strain Y.N.15.51 / Yellowstone #2) (Sulfolobus islandicus) protein is Aspartate carbamoyltransferase catalytic subunit.